The following is a 560-amino-acid chain: Putative transport protein VP1232 (560 aa).

Transmembrane regions (helical) follow at residues Leu-8–Gly-28, Leu-37–Phe-57, Phe-66–Phe-86, His-91–Ser-111, and Val-164–Leu-184. RCK C-terminal domains lie at Leu-205–Gly-292 and Lys-293–Phe-376. 6 helical membrane passes run Leu-386–Phe-406, Val-409–Leu-429, Ala-443–Ala-463, Val-478–Ala-498, Ala-506–Asn-526, and Ala-539–Leu-559.

This sequence belongs to the AAE transporter (TC 2.A.81) family. YbjL subfamily.

Its subcellular location is the cell membrane. This is Putative transport protein VP1232 from Vibrio parahaemolyticus serotype O3:K6 (strain RIMD 2210633).